We begin with the raw amino-acid sequence, 89 residues long: Islet amyloid polypeptide (89 aa).

The signal sequence occupies residues 1–22; the sequence is MCLLKLPVVLIVLLVALHHLKA. Residues 23–31 constitute a propeptide that is removed on maturation; the sequence is TPIESNQVE. Cys35 and Cys40 are disulfide-bonded. Tyr70 bears the Tyrosine amide mark. Positions 74-89 are excised as a propeptide; that stretch reads STVDILNREPLNYLPF.

It belongs to the calcitonin family. In terms of assembly, can form homodimers. Interacts with IDE and INS. Interaction with INS inhibits homodimerization and fibril formation.

It localises to the secreted. Functionally, amylin/IAPP is a glucoregulatory peptide hormone that plays an important role in the regulation of energy homeostasis. Selectively inhibits insulin-stimulated glucose utilization and glycogen deposition in muscle, while not affecting adipocyte glucose metabolism. IAPP function is mediated by the CALCR-RAMPs (AMYRs) receptor complexes. Amylin can also bind CALCR receptor in the absence of RAMPs, although it is more selective for AMYRs. The protein is Islet amyloid polypeptide (IAPP) of Felis catus (Cat).